A 206-amino-acid polypeptide reads, in one-letter code: uncharacterized protein (206 aa).

A run of 4 helical transmembrane segments spans residues 9–29 (ILSL…SVLT), 47–67 (LGVV…LAFL), 74–94 (FFVI…INTI), and 150–170 (IAVI…FYAF).

It belongs to the Rht family.

It localises to the cell membrane. This is an uncharacterized protein from Synechocystis sp. (strain ATCC 27184 / PCC 6803 / Kazusa).